The sequence spans 118 residues: Large ribosomal subunit protein bL20 (118 aa).

It belongs to the bacterial ribosomal protein bL20 family.

Functionally, binds directly to 23S ribosomal RNA and is necessary for the in vitro assembly process of the 50S ribosomal subunit. It is not involved in the protein synthesizing functions of that subunit. The protein is Large ribosomal subunit protein bL20 of Alteromonas mediterranea (strain DSM 17117 / CIP 110805 / LMG 28347 / Deep ecotype).